Here is a 114-residue protein sequence, read N- to C-terminus: Iron-sulfur cluster insertion protein ErpA (114 aa).

Residues cysteine 42, cysteine 106, and cysteine 108 each contribute to the iron-sulfur cluster site.

Belongs to the HesB/IscA family. In terms of assembly, homodimer. It depends on iron-sulfur cluster as a cofactor.

In terms of biological role, required for insertion of 4Fe-4S clusters for at least IspG. This chain is Iron-sulfur cluster insertion protein ErpA, found in Pasteurella multocida (strain Pm70).